The sequence spans 169 residues: MAVLQVLHIPDERLRIVAEPVKEVNAEIQRIVDDMFDTMYAEEGIGLAATQVDIHKRIIVIDVSENREERLVLINPELLEQSGETGIEEGCLSIPEQRALVPRAEKVKIRALDRDGKSFELEADDLLAICIQHEMDHLVGKLFIDYLSPLKQQRIRQKVEKLDRMRTRA.

Fe cation-binding residues include C91 and H133. Residue E134 is part of the active site. Fe cation is bound at residue H137.

The protein belongs to the polypeptide deformylase family. Requires Fe(2+) as cofactor.

The catalysed reaction is N-terminal N-formyl-L-methionyl-[peptide] + H2O = N-terminal L-methionyl-[peptide] + formate. Its function is as follows. Removes the formyl group from the N-terminal Met of newly synthesized proteins. Requires at least a dipeptide for an efficient rate of reaction. N-terminal L-methionine is a prerequisite for activity but the enzyme has broad specificity at other positions. This Enterobacter sp. (strain 638) protein is Peptide deformylase.